The following is a 296-amino-acid chain: Ribosomal RNA small subunit methyltransferase A (296 aa).

The segment covering 1-11 (MERSHVGRDCG) has biased composition (basic and acidic residues). The segment at 1–24 (MERSHVGRDCGSRSSPRAFSVPTS) is disordered. Over residues 12–24 (SRSSPRAFSVPTS) the composition is skewed to polar residues. Asn-43, Leu-45, Gly-70, Glu-91, Asp-113, and Asn-135 together coordinate S-adenosyl-L-methionine.

Belongs to the class I-like SAM-binding methyltransferase superfamily. rRNA adenine N(6)-methyltransferase family. RsmA subfamily.

The protein resides in the cytoplasm. It catalyses the reaction adenosine(1518)/adenosine(1519) in 16S rRNA + 4 S-adenosyl-L-methionine = N(6)-dimethyladenosine(1518)/N(6)-dimethyladenosine(1519) in 16S rRNA + 4 S-adenosyl-L-homocysteine + 4 H(+). Its function is as follows. Specifically dimethylates two adjacent adenosines (A1518 and A1519) in the loop of a conserved hairpin near the 3'-end of 16S rRNA in the 30S particle. May play a critical role in biogenesis of 30S subunits. This is Ribosomal RNA small subunit methyltransferase A from Salinibacter ruber (strain DSM 13855 / M31).